Reading from the N-terminus, the 492-residue chain is Probable cytosol aminopeptidase (492 aa).

Positions 262 and 267 each coordinate Mn(2+). Lys-274 is an active-site residue. Positions 286, 345, and 347 each coordinate Mn(2+). Arg-349 is a catalytic residue.

Belongs to the peptidase M17 family. Mn(2+) serves as cofactor.

It localises to the cytoplasm. It catalyses the reaction Release of an N-terminal amino acid, Xaa-|-Yaa-, in which Xaa is preferably Leu, but may be other amino acids including Pro although not Arg or Lys, and Yaa may be Pro. Amino acid amides and methyl esters are also readily hydrolyzed, but rates on arylamides are exceedingly low.. It carries out the reaction Release of an N-terminal amino acid, preferentially leucine, but not glutamic or aspartic acids.. Functionally, presumably involved in the processing and regular turnover of intracellular proteins. Catalyzes the removal of unsubstituted N-terminal amino acids from various peptides. The protein is Probable cytosol aminopeptidase of Acaryochloris marina (strain MBIC 11017).